A 561-amino-acid chain; its full sequence is Transmembrane protein 209 (561 aa).

At S11 the chain carries Phosphoserine. Residues 28–48 traverse the membrane as a helical segment; it reads VVLAWGLLNVSMAGMIYTEMT. N57 carries an N-linked (GlcNAc...) asparagine glycan. The chain crosses the membrane as a helical span at residues 60 to 80; it reads YWPLWYIELALASLFSLNALF. At S98 the chain carries Phosphoserine. 2 disordered regions span residues 120–156 and 200–232; these read LAAT…KFAT and SSPY…PTDK. Residues 138–152 show a composition bias toward low complexity; it reads SVLSYSPSRSPSTSP. A phosphoserine mark is found at S201 and S248. The tract at residues 250-270 is disordered; the sequence is EEKQHRVKLGSPDSTSPSTSP. Over residues 260-270 the composition is skewed to low complexity; that stretch reads SPDSTSPSTSP. An N-linked (GlcNAc...) asparagine glycan is attached at N274. S278 is modified (phosphoserine).

As to quaternary structure, interacts with NUP205.

The protein resides in the membrane. The protein localises to the nucleus envelope. It is found in the golgi apparatus. It localises to the cytoplasm. In terms of biological role, nuclear envelope protein which in association with NUP205, may be involved in nuclear transport of various nuclear proteins in addition to MYC. This chain is Transmembrane protein 209 (Tmem209), found in Mus musculus (Mouse).